A 274-amino-acid chain; its full sequence is Putative pyruvate, phosphate dikinase regulatory protein 1 (274 aa).

Residue 149–156 (GISRTSKT) coordinates ADP.

It belongs to the pyruvate, phosphate/water dikinase regulatory protein family. PDRP subfamily.

The enzyme catalyses N(tele)-phospho-L-histidyl/L-threonyl-[pyruvate, phosphate dikinase] + ADP = N(tele)-phospho-L-histidyl/O-phospho-L-threonyl-[pyruvate, phosphate dikinase] + AMP + H(+). The catalysed reaction is N(tele)-phospho-L-histidyl/O-phospho-L-threonyl-[pyruvate, phosphate dikinase] + phosphate + H(+) = N(tele)-phospho-L-histidyl/L-threonyl-[pyruvate, phosphate dikinase] + diphosphate. In terms of biological role, bifunctional serine/threonine kinase and phosphorylase involved in the regulation of the pyruvate, phosphate dikinase (PPDK) by catalyzing its phosphorylation/dephosphorylation. In Listeria welshimeri serovar 6b (strain ATCC 35897 / DSM 20650 / CCUG 15529 / CIP 8149 / NCTC 11857 / SLCC 5334 / V8), this protein is Putative pyruvate, phosphate dikinase regulatory protein 1.